The primary structure comprises 453 residues: uncharacterized protein (453 aa).

To S.faecalis plasmid PAM373 EP0012.

This is an uncharacterized protein from Listeria innocua serovar 6a (strain ATCC BAA-680 / CLIP 11262).